The primary structure comprises 680 residues: DNA-directed RNA polymerase subunit beta' (680 aa).

4 residues coordinate Zn(2+): Cys-69, Cys-71, Cys-87, and Cys-90. Residues Asp-489, Asp-491, and Asp-493 each contribute to the Mg(2+) site.

It belongs to the RNA polymerase beta' chain family. RpoC1 subfamily. As to quaternary structure, in plastids the minimal PEP RNA polymerase catalytic core is composed of four subunits: alpha, beta, beta', and beta''. When a (nuclear-encoded) sigma factor is associated with the core the holoenzyme is formed, which can initiate transcription. Mg(2+) is required as a cofactor. It depends on Zn(2+) as a cofactor.

The protein localises to the plastid. Its subcellular location is the chloroplast. The catalysed reaction is RNA(n) + a ribonucleoside 5'-triphosphate = RNA(n+1) + diphosphate. Functionally, DNA-dependent RNA polymerase catalyzes the transcription of DNA into RNA using the four ribonucleoside triphosphates as substrates. This chain is DNA-directed RNA polymerase subunit beta', found in Barbarea verna (Land cress).